A 976-amino-acid chain; its full sequence is R3H domain-containing protein 2 (976 aa).

2 disordered regions span residues 32–71 and 105–147; these read ISKT…AKSN and ISCP…QEYT. The span at 36–56 shows a compositional bias: basic and acidic residues; it reads PSKEEIEKECEDTSLRQETQR. At Ser37 the chain carries Phosphoserine. A compositionally biased stretch (basic residues) spans 58-71; that stretch reads TSNHGHARKRAKSN. Residues 109–143 are compositionally biased toward basic and acidic residues; that stretch reads SDKEEEKSTKDVSEKEDKDKNKEKIPRKMLSRDSS. Ser143 carries the phosphoserine modification. The R3H domain maps to 169-232; sequence RMMLLKLEQE…AVIINKTSNT (64 aa). Residues 233 to 310 enclose the SUZ domain; that stretch reads RIPEQRFSEH…NREGLSRTSS (78 aa). The span at 257–269 shows a compositional bias: basic and acidic residues; the sequence is LKRDDASMDRDDN. Disordered stretches follow at residues 257–376, 401–457, 480–560, 661–725, and 738–780; these read LKRD…ISRP, CTAQ…EAAD, ASTG…PGLQ, GTSP…PSMV, and RGQK…SLSS. Low complexity predominate over residues 306-317; it reads SRTSSSRQSSTD. 3 positions are modified to phosphoserine: Ser330, Ser333, and Ser349. Residues 401 to 415 show a composition bias toward low complexity; it reads CTAQQQQQQQQQQLP. Polar residues-rich tracts occupy residues 441 to 453 and 480 to 504; these read PFGQ…QGST and ASTG…QQVL. The segment covering 543–560 has biased composition (low complexity); that stretch reads SPQRGQQLPQPSQQPGLQ. Over residues 682–691 the composition is skewed to pro residues; the sequence is SPSPCSPPQM. A compositionally biased stretch (low complexity) spans 692-714; sequence PQQYSGVSPSGPGVVVMQLNVPN. The segment covering 748 to 758 has biased composition (polar residues); that stretch reads PDSSPQANTQM. Over residues 759–777 the composition is skewed to low complexity; that stretch reads SSSPVTSPTQSPAPSPVTS. Ser853 and Ser855 each carry phosphoserine. Phosphothreonine occurs at positions 856 and 860.

Its subcellular location is the nucleus. This Homo sapiens (Human) protein is R3H domain-containing protein 2 (R3HDM2).